Consider the following 589-residue polypeptide: Probable arginine--tRNA ligase, cytoplasmic (589 aa).

L-arginine contacts are provided by residues 121–123 (SPN), H132, Y332, D336, and Q360. The 'HIGH' region motif lies at 121–132 (SPNIAKPFHAGH). The segment at 469–483 (DTGPYLQYAHARLCS) is interaction with tRNA.

This sequence belongs to the class-I aminoacyl-tRNA synthetase family.

It is found in the cytoplasm. Its subcellular location is the cytosol. It catalyses the reaction tRNA(Arg) + L-arginine + ATP = L-arginyl-tRNA(Arg) + AMP + diphosphate. In terms of biological role, forms part of a macromolecular complex that catalyzes the attachment of specific amino acids to cognate tRNAs during protein synthesis. This Dictyostelium discoideum (Social amoeba) protein is Probable arginine--tRNA ligase, cytoplasmic (argS1).